The sequence spans 251 residues: Octanoyltransferase (251 aa).

One can recognise a BPL/LPL catalytic domain in the interval 56-237 (ADTGDEIWVV…RLIANLDGES (182 aa)). Substrate-binding positions include 96 to 103 (RGGQITYH), 168 to 170 (ALG), and 181 to 183 (GLS). Cysteine 199 acts as the Acyl-thioester intermediate in catalysis.

The protein belongs to the LipB family.

The protein resides in the cytoplasm. The catalysed reaction is octanoyl-[ACP] + L-lysyl-[protein] = N(6)-octanoyl-L-lysyl-[protein] + holo-[ACP] + H(+). It functions in the pathway protein modification; protein lipoylation via endogenous pathway; protein N(6)-(lipoyl)lysine from octanoyl-[acyl-carrier-protein]: step 1/2. Catalyzes the transfer of endogenously produced octanoic acid from octanoyl-acyl-carrier-protein onto the lipoyl domains of lipoate-dependent enzymes. Lipoyl-ACP can also act as a substrate although octanoyl-ACP is likely to be the physiological substrate. This is Octanoyltransferase from Burkholderia ambifaria (strain MC40-6).